The following is a 75-amino-acid chain: CDC42 small effector protein 1 (75 aa).

Residues Cys-10 and Cys-11 are each lipidated (S-palmitoyl cysteine). The 14-residue stretch at 30–43 folds into the CRIB domain; it reads IGEPTNFVHLTHIG. The interval 45–75 is disordered; the sequence is GEMADGMQPSGPIKEQMRSKVPHANGRNSLL.

This sequence belongs to the CDC42SE/SPEC family.

The protein localises to the cytoplasm. Its subcellular location is the cytoskeleton. The protein resides in the cell membrane. Functionally, probably involved in the organization of the actin cytoskeleton by acting downstream of CDC42, inducing actin filament assembly. In Danio rerio (Zebrafish), this protein is CDC42 small effector protein 1 (cdc42se1).